The sequence spans 610 residues: Elongation factor 4 (610 aa).

In terms of domain architecture, tr-type G spans 14 to 198 (ANIRNFSIVA…AIVTRLPPPQ (185 aa)). Residues 26–31 (DHGKST) and 145–148 (NKVD) contribute to the GTP site.

The protein belongs to the TRAFAC class translation factor GTPase superfamily. Classic translation factor GTPase family. LepA subfamily.

The protein localises to the cell inner membrane. The catalysed reaction is GTP + H2O = GDP + phosphate + H(+). Its function is as follows. Required for accurate and efficient protein synthesis under certain stress conditions. May act as a fidelity factor of the translation reaction, by catalyzing a one-codon backward translocation of tRNAs on improperly translocated ribosomes. Back-translocation proceeds from a post-translocation (POST) complex to a pre-translocation (PRE) complex, thus giving elongation factor G a second chance to translocate the tRNAs correctly. Binds to ribosomes in a GTP-dependent manner. The polypeptide is Elongation factor 4 (Nitrobacter hamburgensis (strain DSM 10229 / NCIMB 13809 / X14)).